The following is a 395-amino-acid chain: Acetate kinase (395 aa).

Residue Asn8 coordinates Mg(2+). Lys15 is an ATP binding site. Arg89 is a binding site for substrate. The active-site Proton donor/acceptor is the Asp146. ATP contacts are provided by residues 206–210, 281–283, and 329–333; these read HLGNG, DLR, and GIGEN. Residue Glu382 coordinates Mg(2+).

Belongs to the acetokinase family. In terms of assembly, homodimer. Mg(2+) serves as cofactor. It depends on Mn(2+) as a cofactor.

The protein resides in the cytoplasm. It carries out the reaction acetate + ATP = acetyl phosphate + ADP. It functions in the pathway metabolic intermediate biosynthesis; acetyl-CoA biosynthesis; acetyl-CoA from acetate: step 1/2. In terms of biological role, catalyzes the formation of acetyl phosphate from acetate and ATP. Can also catalyze the reverse reaction. The protein is Acetate kinase of Shouchella clausii (strain KSM-K16) (Alkalihalobacillus clausii).